A 235-amino-acid chain; its full sequence is Ion-translocating oxidoreductase complex subunit E (235 aa).

The next 5 membrane-spanning stretches (helical) occupy residues leucine 63–phenylalanine 83, isoleucine 93–alanine 113, threonine 117–glycine 137, isoleucine 152–leucine 172, and serine 206–isoleucine 226.

Belongs to the NqrDE/RnfAE family. As to quaternary structure, the complex is composed of six subunits: RnfA, RnfB, RnfC, RnfD, RnfE and RnfG.

The protein localises to the cell inner membrane. In terms of biological role, part of a membrane-bound complex that couples electron transfer with translocation of ions across the membrane. This is Ion-translocating oxidoreductase complex subunit E from Haemophilus influenzae (strain ATCC 51907 / DSM 11121 / KW20 / Rd).